A 503-amino-acid chain; its full sequence is Probable protein kinase UbiB (503 aa).

A helical transmembrane segment spans residues 13-35; that stretch reads TFYRYRLAGLCASLMGSGWICAL. One can recognise a Protein kinase domain in the interval 120 to 491; the sequence is EFETEPIASA…QQRQSLWLAV (372 aa). ATP is bound by residues 126 to 134 and Lys148; that span reads IASASIAQV. Asp283 acts as the Proton acceptor in catalysis. The chain crosses the membrane as a helical span at residues 485–502; it reads QSLWLAVIAVVLLLILLL.

This sequence belongs to the ABC1 family. UbiB subfamily.

The protein resides in the cell inner membrane. It participates in cofactor biosynthesis; ubiquinone biosynthesis [regulation]. Functionally, is probably a protein kinase regulator of UbiI activity which is involved in aerobic coenzyme Q (ubiquinone) biosynthesis. This Neisseria meningitidis serogroup B (strain ATCC BAA-335 / MC58) protein is Probable protein kinase UbiB.